The primary structure comprises 286 residues: Polyamine aminopropyltransferase (286 aa).

Positions 3-240 constitute a PABS domain; the sequence is DLWYSESHAD…GHWLFGFASK (238 aa). An S-methyl-5'-thioadenosine-binding site is contributed by Q32. Spermidine-binding residues include H63 and D87. Residues E107 and 139-140 each bind S-methyl-5'-thioadenosine; that span reads DG. Catalysis depends on D158, which acts as the Proton acceptor. 158–161 contributes to the spermidine binding site; the sequence is DSTD. P165 contacts S-methyl-5'-thioadenosine.

It belongs to the spermidine/spermine synthase family. Homodimer or homotetramer.

Its subcellular location is the cytoplasm. The catalysed reaction is S-adenosyl 3-(methylsulfanyl)propylamine + putrescine = S-methyl-5'-thioadenosine + spermidine + H(+). It functions in the pathway amine and polyamine biosynthesis; spermidine biosynthesis; spermidine from putrescine: step 1/1. Its function is as follows. Catalyzes the irreversible transfer of a propylamine group from the amino donor S-adenosylmethioninamine (decarboxy-AdoMet) to putrescine (1,4-diaminobutane) to yield spermidine. This chain is Polyamine aminopropyltransferase, found in Clostridium acetobutylicum (strain ATCC 824 / DSM 792 / JCM 1419 / IAM 19013 / LMG 5710 / NBRC 13948 / NRRL B-527 / VKM B-1787 / 2291 / W).